We begin with the raw amino-acid sequence, 244 residues long: Small ribosomal subunit protein uS2 (244 aa).

The protein belongs to the universal ribosomal protein uS2 family.

The protein is Small ribosomal subunit protein uS2 of Desulforudis audaxviator (strain MP104C).